The primary structure comprises 241 residues: ATP synthase subunit a (241 aa).

5 helical membrane passes run 30-50, 91-111, 128-148, 193-213, and 214-234; these read GQVF…ISLG, FIGT…LIPW, INTT…AGLS, LVVG…VMFL, and GLFT…YYIG.

This sequence belongs to the ATPase A chain family. F-type ATPases have 2 components, CF(1) - the catalytic core - and CF(0) - the membrane proton channel. CF(1) has five subunits: alpha(3), beta(3), gamma(1), delta(1), epsilon(1). CF(0) has four main subunits: a, b, b' and c.

It localises to the cellular thylakoid membrane. Functionally, key component of the proton channel; it plays a direct role in the translocation of protons across the membrane. The polypeptide is ATP synthase subunit a (Prochlorococcus marinus (strain MIT 9215)).